The sequence spans 349 residues: Phosphoribosylformylglycinamidine cyclo-ligase (349 aa).

Belongs to the AIR synthase family.

It is found in the cytoplasm. The enzyme catalyses 2-formamido-N(1)-(5-O-phospho-beta-D-ribosyl)acetamidine + ATP = 5-amino-1-(5-phospho-beta-D-ribosyl)imidazole + ADP + phosphate + H(+). It participates in purine metabolism; IMP biosynthesis via de novo pathway; 5-amino-1-(5-phospho-D-ribosyl)imidazole from N(2)-formyl-N(1)-(5-phospho-D-ribosyl)glycinamide: step 2/2. The protein is Phosphoribosylformylglycinamidine cyclo-ligase of Methanococcus maripaludis (strain C7 / ATCC BAA-1331).